A 222-amino-acid polypeptide reads, in one-letter code: L-cystine transport system permease protein TcyL (222 aa).

Topologically, residues 1 to 22 (MQESIQLVIDSLPFLLKGAGYT) are periplasmic. The ABC transmembrane type-1 domain maps to 19–207 (AGYTLQLSIG…IMATVLSTLQ (189 aa)). A helical membrane pass occupies residues 23-43 (LQLSIGGMFFGLLLGFILALM). The Cytoplasmic portion of the chain corresponds to 44–64 (RLSPIWPVRWLARFYISIFRG). Residues 65 to 85 (TPLIAQLFMIYYGLPQFGIEL) traverse the membrane as a helical segment. At 86 to 182 (DPIPSAMIGL…RQAQLITSRT (97 aa)) the chain is on the periplasmic side. The helical transmembrane segment at 183–203 (LEVFTMYLAASLIYWIMATVL) threads the bilayer. The Cytoplasmic segment spans residues 204-222 (STLQNHFENQLNRQEREPK).

This sequence belongs to the binding-protein-dependent transport system permease family. HisMQ subfamily. As to quaternary structure, the complex is composed of two ATP-binding proteins (TcyN), two transmembrane proteins (TcyL) and a solute-binding protein (TcyJ).

It is found in the cell inner membrane. In terms of biological role, part of the ABC transporter complex TcyJLN involved in L-cystine import. Responsible for the translocation of the substrate across the membrane. The sequence is that of L-cystine transport system permease protein TcyL from Escherichia coli O6:H1 (strain CFT073 / ATCC 700928 / UPEC).